The primary structure comprises 658 residues: Probable methyl-accepting chemotaxis protein BT9727_0469 (658 aa).

The Cytoplasmic segment spans residues M1–K14. Residues L15 to Y35 traverse the membrane as a helical segment. Over Q36–T283 the chain is Extracellular. Positions E44–I109 form a coiled coil. The Cache domain maps to I150–K221. A helical membrane pass occupies residues V284–I304. The HAMP domain occupies A301–S353. At S305–V658 the chain is on the cytoplasmic side. Position 368 is a glutamate methyl ester (Glu) (E368). In terms of domain architecture, Methyl-accepting transducer spans S372–A622. Q592 carries the post-translational modification Deamidated glutamine. Q592 is modified (glutamate methyl ester (Gln)). Glutamate methyl ester (Glu) is present on residues E627 and E634.

Belongs to the methyl-accepting chemotaxis (MCP) protein family.

The protein resides in the cell membrane. Its function is as follows. Chemotactic-signal transducers respond to changes in the concentration of attractants and repellents in the environment, transduce a signal from the outside to the inside of the cell, and facilitate sensory adaptation through the variation of the level of methylation. The polypeptide is Probable methyl-accepting chemotaxis protein BT9727_0469 (Bacillus thuringiensis subsp. konkukian (strain 97-27)).